A 190-amino-acid polypeptide reads, in one-letter code: Selenoprotein S (190 aa).

The segment covering 1–13 (MEAEDGARVRNED) has biased composition (basic and acidic residues). The segment at 1-20 (MEAEDGARVRNEDVPPQNQD) is disordered. The chain crosses the membrane as a helical span at residues 30-50 (AFMSEYGWYLLFGCVGVYLLI). A compositionally biased stretch (low complexity) spans 58–68 (SSTQTRSSSGS). Residues 58–190 (SSTQTRSSSG…RRGPSAGGUG (133 aa)) are disordered. A compositionally biased stretch (basic and acidic residues) spans 79 to 120 (RRQEALEASRRRMQEEQDARAAEFREKQRMLEEEKRRQKIEM). Polar residues predominate over residues 136-151 (VAQQNTEEAASSSSLR). Residue Sec189 is a non-standard amino acid, selenocysteine.

This sequence belongs to the selenoprotein S family.

Its subcellular location is the endoplasmic reticulum membrane. It is found in the cytoplasm. Involved in the degradation process of misfolded endoplasmic reticulum (ER) luminal proteins. Participates in the transfer of misfolded proteins from the ER to the cytosol, where they are destroyed by the proteasome in a ubiquitin-dependent manner. The chain is Selenoprotein S (vimp) from Danio rerio (Zebrafish).